A 177-amino-acid chain; its full sequence is Putative pre-16S rRNA nuclease (177 aa).

It belongs to the YqgF nuclease family.

Its subcellular location is the cytoplasm. In terms of biological role, could be a nuclease involved in processing of the 5'-end of pre-16S rRNA. The chain is Putative pre-16S rRNA nuclease from Psychrobacter sp. (strain PRwf-1).